The following is a 686-amino-acid chain: Protein SDA1 homolog (686 aa).

Residues serine 232, serine 234, and serine 236 each carry the phosphoserine modification. Residues 254 to 315 (KKGSKNKKKL…SCKERFEVKM (62 aa)) adopt a coiled-coil conformation. Positions 484–508 (LEKEENTENDEDGWESASLSEEEED) are disordered. The segment covering 490–508 (TENDEDGWESASLSEEEED) has biased composition (acidic residues). At threonine 551 the chain carries Phosphothreonine. The segment at 563–586 (MKKEMDAAPGKAQKRKYLDMDSDE) is disordered. Phosphoserine occurs at positions 584, 588, and 594. Residues 604-649 (KPKSDKETRLATAMAGRTDRKEFVRKKTKINPFSSSTNKEKKKQKN) form a disordered region.

The protein belongs to the SDA1 family.

Its subcellular location is the nucleus. It is found in the nucleolus. In terms of biological role, required for 60S pre-ribosomal subunits export to the cytoplasm. The protein is Protein SDA1 homolog (Sdad1) of Rattus norvegicus (Rat).